We begin with the raw amino-acid sequence, 553 residues long: CTP synthase (553 aa).

Residues 1–266 form an amidoligase domain region; the sequence is MTKNYIFITG…DNYICEYFKL (266 aa). Residue S14 coordinates CTP. Residue S14 coordinates UTP. Residues 15 to 20 and D72 each bind ATP; that span reads SLGKGI. 2 residues coordinate Mg(2+): D72 and E140. Residues 147–149, 187–192, and K223 contribute to the CTP site; these read DIE and KTKPTQ. UTP is bound by residues 187–192 and K223; that span reads KTKPTQ. 239-241 contributes to the ATP binding site; it reads KDV. In terms of domain architecture, Glutamine amidotransferase type-1 spans 291–544; sequence IIGIIGKYIK…IKSAKKNKKN (254 aa). L-glutamine is bound at residue G352. C379 functions as the Nucleophile; for glutamine hydrolysis in the catalytic mechanism. L-glutamine is bound by residues 380–383, E403, and R472; that span reads LGMQ. Catalysis depends on residues H517 and E519.

Belongs to the CTP synthase family. As to quaternary structure, homotetramer.

It catalyses the reaction UTP + L-glutamine + ATP + H2O = CTP + L-glutamate + ADP + phosphate + 2 H(+). The enzyme catalyses L-glutamine + H2O = L-glutamate + NH4(+). The catalysed reaction is UTP + NH4(+) + ATP = CTP + ADP + phosphate + 2 H(+). It participates in pyrimidine metabolism; CTP biosynthesis via de novo pathway; CTP from UDP: step 2/2. Allosterically activated by GTP, when glutamine is the substrate; GTP has no effect on the reaction when ammonia is the substrate. The allosteric effector GTP functions by stabilizing the protein conformation that binds the tetrahedral intermediate(s) formed during glutamine hydrolysis. Inhibited by the product CTP, via allosteric rather than competitive inhibition. Catalyzes the ATP-dependent amination of UTP to CTP with either L-glutamine or ammonia as the source of nitrogen. Regulates intracellular CTP levels through interactions with the four ribonucleotide triphosphates. The protein is CTP synthase of Buchnera aphidicola subsp. Schizaphis graminum (strain Sg).